Here is a 251-residue protein sequence, read N- to C-terminus: Triosephosphate isomerase (251 aa).

Substrate is bound at residue 9–11 (NWK). H96 (electrophile) is an active-site residue. Residue E168 is the Proton acceptor of the active site. Substrate is bound by residues G174, S214, and 235–236 (GG).

Belongs to the triosephosphate isomerase family. As to quaternary structure, homodimer.

Its subcellular location is the cytoplasm. The enzyme catalyses D-glyceraldehyde 3-phosphate = dihydroxyacetone phosphate. Its pathway is carbohydrate biosynthesis; gluconeogenesis. It participates in carbohydrate degradation; glycolysis; D-glyceraldehyde 3-phosphate from glycerone phosphate: step 1/1. Involved in the gluconeogenesis. Catalyzes stereospecifically the conversion of dihydroxyacetone phosphate (DHAP) to D-glyceraldehyde-3-phosphate (G3P). This Porphyromonas gingivalis (strain ATCC BAA-308 / W83) protein is Triosephosphate isomerase.